A 46-amino-acid polypeptide reads, in one-letter code: Sperm protamine P1 (46 aa).

Belongs to the protamine P1 family. As to expression, testis.

Its subcellular location is the nucleus. It localises to the chromosome. Protamines substitute for histones in the chromatin of sperm during the haploid phase of spermatogenesis. They compact sperm DNA into a highly condensed, stable and inactive complex. In Hypsugo savii (Savi's pipistrelle), this protein is Sperm protamine P1 (PRM1).